We begin with the raw amino-acid sequence, 71 residues long: Protein translocase subunit SecE (71 aa).

Residues 43–63 (VAGAGILAVGAVGFIIYVLLT) traverse the membrane as a helical segment.

This sequence belongs to the SecE/SEC61-gamma family. Component of the Sec protein translocase complex. Heterotrimer consisting of SecY (alpha), SecG (beta) and SecE (gamma) subunits. The heterotrimers can form oligomers, although 1 heterotrimer is thought to be able to translocate proteins. Interacts with the ribosome. May interact with SecDF, and other proteins may be involved.

It is found in the cell membrane. Essential subunit of the Sec protein translocation channel SecYEG. Clamps together the 2 halves of SecY. May contact the channel plug during translocation. The sequence is that of Protein translocase subunit SecE from Methanosarcina mazei (strain ATCC BAA-159 / DSM 3647 / Goe1 / Go1 / JCM 11833 / OCM 88) (Methanosarcina frisia).